Here is a 160-residue protein sequence, read N- to C-terminus: UPF0260 protein Rleg2_0895 (160 aa).

It belongs to the UPF0260 family.

In Rhizobium leguminosarum bv. trifolii (strain WSM2304), this protein is UPF0260 protein Rleg2_0895.